The primary structure comprises 334 residues: Aspartate carbamoyltransferase catalytic subunit (334 aa).

Arg-71 and Thr-72 together coordinate carbamoyl phosphate. Lys-99 is a binding site for L-aspartate. Arg-121, His-151, and Gln-154 together coordinate carbamoyl phosphate. L-aspartate is bound by residues Arg-184 and Arg-239. Residues Gly-280 and Pro-281 each coordinate carbamoyl phosphate.

This sequence belongs to the aspartate/ornithine carbamoyltransferase superfamily. ATCase family. As to quaternary structure, heterododecamer (2C3:3R2) of six catalytic PyrB chains organized as two trimers (C3), and six regulatory PyrI chains organized as three dimers (R2).

It carries out the reaction carbamoyl phosphate + L-aspartate = N-carbamoyl-L-aspartate + phosphate + H(+). It participates in pyrimidine metabolism; UMP biosynthesis via de novo pathway; (S)-dihydroorotate from bicarbonate: step 2/3. In terms of biological role, catalyzes the condensation of carbamoyl phosphate and aspartate to form carbamoyl aspartate and inorganic phosphate, the committed step in the de novo pyrimidine nucleotide biosynthesis pathway. The sequence is that of Aspartate carbamoyltransferase catalytic subunit from Pseudomonas syringae pv. syringae (strain B728a).